The chain runs to 276 residues: Digeranylgeranylglyceryl phosphate synthase (276 aa).

7 consecutive transmembrane segments (helical) span residues 14–34, 40–60, 92–112, 146–166, 202–222, 224–244, and 256–276; these read NCIL…GHFP, LLIF…NDYF, FAVG…LGVI, GAVA…AFLV, VGVL…KASV, VGYY…YLIL, and QKLL…AAIV.

The protein belongs to the UbiA prenyltransferase family. DGGGP synthase subfamily. It depends on Mg(2+) as a cofactor.

It localises to the cell membrane. The enzyme catalyses sn-3-O-(geranylgeranyl)glycerol 1-phosphate + (2E,6E,10E)-geranylgeranyl diphosphate = 2,3-bis-O-(geranylgeranyl)-sn-glycerol 1-phosphate + diphosphate. The protein operates within membrane lipid metabolism; glycerophospholipid metabolism. Its function is as follows. Prenyltransferase that catalyzes the transfer of the geranylgeranyl moiety of geranylgeranyl diphosphate (GGPP) to the C2 hydroxyl of (S)-3-O-geranylgeranylglyceryl phosphate (GGGP). This reaction is the second ether-bond-formation step in the biosynthesis of archaeal membrane lipids. This is Digeranylgeranylglyceryl phosphate synthase from Thermococcus onnurineus (strain NA1).